We begin with the raw amino-acid sequence, 354 residues long: UDP-N-acetylglucosamine--N-acetylmuramyl-(pentapeptide) pyrophosphoryl-undecaprenol N-acetylglucosamine transferase (354 aa).

Residues 15-17 (TGG), Asn-127, Arg-163, Ser-191, Ile-244, 263-268 (ALTVSE), and Gln-288 each bind UDP-N-acetyl-alpha-D-glucosamine.

The protein belongs to the glycosyltransferase 28 family. MurG subfamily.

It localises to the cell inner membrane. The enzyme catalyses di-trans,octa-cis-undecaprenyl diphospho-N-acetyl-alpha-D-muramoyl-L-alanyl-D-glutamyl-meso-2,6-diaminopimeloyl-D-alanyl-D-alanine + UDP-N-acetyl-alpha-D-glucosamine = di-trans,octa-cis-undecaprenyl diphospho-[N-acetyl-alpha-D-glucosaminyl-(1-&gt;4)]-N-acetyl-alpha-D-muramoyl-L-alanyl-D-glutamyl-meso-2,6-diaminopimeloyl-D-alanyl-D-alanine + UDP + H(+). It participates in cell wall biogenesis; peptidoglycan biosynthesis. Functionally, cell wall formation. Catalyzes the transfer of a GlcNAc subunit on undecaprenyl-pyrophosphoryl-MurNAc-pentapeptide (lipid intermediate I) to form undecaprenyl-pyrophosphoryl-MurNAc-(pentapeptide)GlcNAc (lipid intermediate II). The sequence is that of UDP-N-acetylglucosamine--N-acetylmuramyl-(pentapeptide) pyrophosphoryl-undecaprenol N-acetylglucosamine transferase from Aliivibrio salmonicida (strain LFI1238) (Vibrio salmonicida (strain LFI1238)).